Reading from the N-terminus, the 151-residue chain is Putative pre-16S rRNA nuclease (151 aa).

It belongs to the YqgF nuclease family.

It localises to the cytoplasm. Functionally, could be a nuclease involved in processing of the 5'-end of pre-16S rRNA. The sequence is that of Putative pre-16S rRNA nuclease from Nitrosospira multiformis (strain ATCC 25196 / NCIMB 11849 / C 71).